The chain runs to 295 residues: uncharacterized protein (295 aa).

An HTH araC/xylS-type domain is found at 8–106; it reads QKTINWIESH…HMPPGAYRTF (99 aa). The H-T-H motif DNA-binding region spans 25–46; sequence EDIVNVSSFSKFHFHRIFQKEV.

Functionally, probable transcriptional regulator. This is an uncharacterized protein from Bacillus subtilis (strain 168).